The chain runs to 211 residues: Probable nicotinate-nucleotide adenylyltransferase (211 aa).

This sequence belongs to the NadD family.

It catalyses the reaction nicotinate beta-D-ribonucleotide + ATP + H(+) = deamido-NAD(+) + diphosphate. It functions in the pathway cofactor biosynthesis; NAD(+) biosynthesis; deamido-NAD(+) from nicotinate D-ribonucleotide: step 1/1. In terms of biological role, catalyzes the reversible adenylation of nicotinate mononucleotide (NaMN) to nicotinic acid adenine dinucleotide (NaAD). This Corynebacterium kroppenstedtii (strain DSM 44385 / JCM 11950 / CIP 105744 / CCUG 35717) protein is Probable nicotinate-nucleotide adenylyltransferase.